The sequence spans 40 residues: Snaclec tokaracetin subunit alpha (40 aa).

The 40-residue stretch at 1–40 (DCPSGWSSFKQYCYKPFKQLKTWEDAERFCLEQVKGAHLV) folds into the C-type lectin domain. Residues Cys2 and Cys13 are joined by a disulfide bond.

It belongs to the snaclec family. In terms of assembly, heterodimer of subunits alpha and beta; disulfide-linked. Expressed by the venom gland.

Its subcellular location is the secreted. Its function is as follows. Platelet antagonist that specifically and reversibly binds to a site on platelet glycoprotein Ibalpha (GP1BA) close to or identical with the site for vWF binding. It inhibits the binding of vWF to platelets and vWF-dependent shear-induced platelet aggregation. The chain is Snaclec tokaracetin subunit alpha from Protobothrops tokarensis (Tokara habu).